The sequence spans 419 residues: Tyrosine--tRNA ligase (419 aa).

An L-tyrosine-binding site is contributed by Tyr34. A 'HIGH' region motif is present at residues 39–48 (PTADSLHIGN). The L-tyrosine site is built by Tyr169 and Gln173. The short motif at 230–234 (KFGKT) is the 'KMSKS' region element. ATP is bound at residue Lys233. The S4 RNA-binding domain occupies 352–419 (VPLVELLVSA…KKKYYLIRYA (68 aa)).

This sequence belongs to the class-I aminoacyl-tRNA synthetase family. TyrS type 1 subfamily. Homodimer.

It localises to the cytoplasm. It carries out the reaction tRNA(Tyr) + L-tyrosine + ATP = L-tyrosyl-tRNA(Tyr) + AMP + diphosphate + H(+). Functionally, catalyzes the attachment of tyrosine to tRNA(Tyr) in a two-step reaction: tyrosine is first activated by ATP to form Tyr-AMP and then transferred to the acceptor end of tRNA(Tyr). The sequence is that of Tyrosine--tRNA ligase from Bacillus caldotenax.